The following is a 185-amino-acid chain: Transmembrane protein 252 (185 aa).

A run of 2 helical transmembrane segments spans residues 8-28 (VLCA…GFFI) and 39-59 (LVVA…GIFW). The segment at 125–149 (YTETSLEPQDKDKNDPQPEAPPPYP) is disordered.

The protein localises to the membrane. In Rattus norvegicus (Rat), this protein is Transmembrane protein 252 (Tmem252).